A 241-amino-acid chain; its full sequence is Lipopolysaccharide export system ATP-binding protein LptB (241 aa).

One can recognise an ABC transporter domain in the interval 5-237 (LQAQSLFKSY…PMVRQVYLGD (233 aa)). 37–44 (GPNGAGKT) provides a ligand contact to ATP.

This sequence belongs to the ABC transporter superfamily. Outer membrane lipopolysaccharide export (TC 1.B.42) family. Component of the lipopolysaccharide transport and assembly complex. The LptBFG transporter is composed of two ATP-binding proteins (LptB) and two transmembrane proteins (LptF and LptG).

The protein localises to the cytoplasm. The protein resides in the cell inner membrane. In terms of biological role, part of the ABC transporter complex LptBFG involved in the translocation of lipopolysaccharide (LPS) from the inner membrane to the outer membrane. Probably responsible for energy coupling to the transport system. This Acidithiobacillus ferridurans protein is Lipopolysaccharide export system ATP-binding protein LptB (lptB).